The primary structure comprises 119 residues: Large ribosomal subunit protein bL20 (119 aa).

Belongs to the bacterial ribosomal protein bL20 family.

Binds directly to 23S ribosomal RNA and is necessary for the in vitro assembly process of the 50S ribosomal subunit. It is not involved in the protein synthesizing functions of that subunit. The sequence is that of Large ribosomal subunit protein bL20 from Saccharophagus degradans (strain 2-40 / ATCC 43961 / DSM 17024).